We begin with the raw amino-acid sequence, 775 residues long: tRNA(Met) cytidine acetyltransferase TmcA (775 aa).

2 disordered regions span residues methionine 1–isoleucine 33 and threonine 191–alanine 215. Residues aspartate 199–proline 212 are compositionally biased toward pro residues. Residues glutamine 230, glycine 254–leucine 263, and arginine 403 each bind ATP. The region spanning valine 438 to serine 623 is the N-acetyltransferase domain. Residues isoleucine 549–threonine 551, arginine 556–serine 562, and glutamate 588 contribute to the acetyl-CoA site.

Belongs to the RNA cytidine acetyltransferase family. TmcA subfamily.

The protein resides in the cytoplasm. It carries out the reaction cytidine(34) in elongator tRNA(Met) + acetyl-CoA + ATP + H2O = N(4)-acetylcytidine(34) in elongator tRNA(Met) + ADP + phosphate + CoA + H(+). In terms of biological role, catalyzes the formation of N(4)-acetylcytidine (ac(4)C) at the wobble position of tRNA(Met), by using acetyl-CoA as an acetyl donor and ATP (or GTP). This chain is tRNA(Met) cytidine acetyltransferase TmcA, found in Haloarcula marismortui (strain ATCC 43049 / DSM 3752 / JCM 8966 / VKM B-1809) (Halobacterium marismortui).